Consider the following 389-residue polypeptide: Arrestin-C (389 aa).

Belongs to the arrestin family. As to expression, retina and pineal gland.

May play a role in an as yet undefined retina-specific signal transduction. Could bind to photoactivated-phosphorylated red/green opsins. This Lithobates pipiens (Northern leopard frog) protein is Arrestin-C (arr3).